The sequence spans 156 residues: MNLNATLFAQMVVFLVLAWFTMKFVWPPLINALDERSKKIADGLAAAEKGKAELDAAHKRVDQELAQARNDGQQRIADAEKRAQAVAEEIKANAQAEAARIVAQAKAEAEQQIVKAREALRGEVAALAVKGAEQILKREVDQTAHAQLLNQLKAEL.

Residues 7 to 29 (LFAQMVVFLVLAWFTMKFVWPPL) traverse the membrane as a helical segment.

The protein belongs to the ATPase B chain family. F-type ATPases have 2 components, F(1) - the catalytic core - and F(0) - the membrane proton channel. F(1) has five subunits: alpha(3), beta(3), gamma(1), delta(1), epsilon(1). F(0) has three main subunits: a(1), b(2) and c(10-14). The alpha and beta chains form an alternating ring which encloses part of the gamma chain. F(1) is attached to F(0) by a central stalk formed by the gamma and epsilon chains, while a peripheral stalk is formed by the delta and b chains.

It localises to the cell inner membrane. Functionally, f(1)F(0) ATP synthase produces ATP from ADP in the presence of a proton or sodium gradient. F-type ATPases consist of two structural domains, F(1) containing the extramembraneous catalytic core and F(0) containing the membrane proton channel, linked together by a central stalk and a peripheral stalk. During catalysis, ATP synthesis in the catalytic domain of F(1) is coupled via a rotary mechanism of the central stalk subunits to proton translocation. In terms of biological role, component of the F(0) channel, it forms part of the peripheral stalk, linking F(1) to F(0). This is ATP synthase subunit b from Burkholderia cenocepacia (strain ATCC BAA-245 / DSM 16553 / LMG 16656 / NCTC 13227 / J2315 / CF5610) (Burkholderia cepacia (strain J2315)).